The sequence spans 211 residues: MQLGEHTHPQKNPKSLAGCLLPNPHPQLQLRGKRAAGLLLRRNPWCHPQAPGGSSTWAPSLPPILAPQAYLNFAPPTLVPGGSPGTEAQPVAPANALGSRSKLNLTQPSCLSSGSHLPLPFPAGMCPHPANPTWALRKGAEVPQGPPLSHTRKALCLAASGVGALLLEVPRHPGWGQQSAAGFQQVFQEGAGTHFPSVRVQPGRGKLQGQR.

This is an uncharacterized protein from Homo sapiens (Human).